We begin with the raw amino-acid sequence, 172 residues long: 3-phenylpropionate/cinnamic acid dioxygenase subunit beta (172 aa).

It belongs to the bacterial ring-hydroxylating dioxygenase beta subunit family. In terms of assembly, this dioxygenase system consists of four proteins: the two subunits of the hydroxylase component (HcaE and HcaF), a ferredoxin (HcaC) and a ferredoxin reductase (HcaD).

It catalyses the reaction 3-phenylpropanoate + NADH + O2 + H(+) = 3-(cis-5,6-dihydroxycyclohexa-1,3-dien-1-yl)propanoate + NAD(+). The catalysed reaction is (E)-cinnamate + NADH + O2 + H(+) = (2E)-3-(cis-5,6-dihydroxycyclohexa-1,3-dien-1-yl)prop-2-enoate + NAD(+). It participates in aromatic compound metabolism; 3-phenylpropanoate degradation. Its function is as follows. Part of the multicomponent 3-phenylpropionate dioxygenase. Converts 3-phenylpropionic acid (PP) and cinnamic acid (CI) into 3-phenylpropionate-dihydrodiol (PP-dihydrodiol) and cinnamic acid-dihydrodiol (CI-dihydrodiol), respectively. The chain is 3-phenylpropionate/cinnamic acid dioxygenase subunit beta from Shigella flexneri serotype 5b (strain 8401).